The sequence spans 252 residues: Neurexophilin-3 (252 aa).

The first 22 residues, 1 to 22 (MQLTRCCFVFLVQGSLYLVICG), serve as a signal peptide directing secretion. An II region spans residues 23–75 (QDDGPPGSEDPEHDDHEGQPRPRVPRKRGHISPKSRPLANSTLLGLLAPPGEV). The segment at 27–59 (PPGSEDPEHDDHEGQPRPRVPRKRGHISPKSRP) is disordered. Basic residues predominate over residues 45-55 (RVPRKRGHISP). Residues N62, N127, N137, and N143 are each glycosylated (N-linked (GlcNAc...) asparagine). The III stretch occupies residues 76–157 (WGVLGQPPNR…LVPPSKAVEF (82 aa)). An IV (linker domain) region spans residues 158 to 166 (HQEQQIFIE). Positions 167-252 (AKASKIFNCR…HSDTPYYPSG (86 aa)) are v (Cys-rich).

The protein belongs to the neurexophilin family. Post-translationally, may be proteolytically processed at the boundary between the N-terminal non-conserved and the central conserved domain in neuron-like cells. Highest level in brain, present also in lung, kidney and testis.

The protein localises to the secreted. In terms of biological role, may be signaling molecules that resemble neuropeptides. Ligand for alpha-neurexins. In Mus musculus (Mouse), this protein is Neurexophilin-3 (Nxph3).